The primary structure comprises 101 residues: A-type ATP synthase subunit F (101 aa).

The protein belongs to the V-ATPase F subunit family. As to quaternary structure, has multiple subunits with at least A(3), B(3), C, D, E, F, H, I and proteolipid K(x).

The protein resides in the cell membrane. Its function is as follows. Component of the A-type ATP synthase that produces ATP from ADP in the presence of a proton gradient across the membrane. The chain is A-type ATP synthase subunit F from Methanosarcina acetivorans (strain ATCC 35395 / DSM 2834 / JCM 12185 / C2A).